The primary structure comprises 502 residues: Probable cytosol aminopeptidase (502 aa).

The Mn(2+) site is built by Lys-265 and Asp-270. Lys-277 is an active-site residue. Mn(2+) is bound by residues Asp-288, Asp-347, and Glu-349. Arg-351 is a catalytic residue.

The protein belongs to the peptidase M17 family. It depends on Mn(2+) as a cofactor.

It is found in the cytoplasm. The enzyme catalyses Release of an N-terminal amino acid, Xaa-|-Yaa-, in which Xaa is preferably Leu, but may be other amino acids including Pro although not Arg or Lys, and Yaa may be Pro. Amino acid amides and methyl esters are also readily hydrolyzed, but rates on arylamides are exceedingly low.. The catalysed reaction is Release of an N-terminal amino acid, preferentially leucine, but not glutamic or aspartic acids.. Its function is as follows. Presumably involved in the processing and regular turnover of intracellular proteins. Catalyzes the removal of unsubstituted N-terminal amino acids from various peptides. The protein is Probable cytosol aminopeptidase of Rickettsia bellii (strain RML369-C).